Consider the following 296-residue polypeptide: Regulatory protein PchR (296 aa).

One can recognise an HTH araC/xylS-type domain in the interval 201–296; it reads HAARDLLVGA…RYGISPSEIR (96 aa). 2 consecutive DNA-binding regions (H-T-H motif) follow at residues 218 to 239 and 266 to 288; these read DTLASRVGMNPRKLTAGFRKVF and VSTVAYRVGYSPAHFSIAFRKRY.

Positive activator of the genes for pyochelin and ferripyochelin receptors. In Pseudomonas aeruginosa (strain ATCC 15692 / DSM 22644 / CIP 104116 / JCM 14847 / LMG 12228 / 1C / PRS 101 / PAO1), this protein is Regulatory protein PchR (pchR).